A 957-amino-acid chain; its full sequence is Calsyntenin-3 (957 aa).

The first 19 residues, 1–19, serve as a signal peptide directing secretion; it reads MTPLLFPLLLASLLPSSSC. Over 20 to 848 the chain is Extracellular; that stretch reads NKANKHKPWI…SHRNSMVPSA (829 aa). Cadherin domains follow at residues 29–145 and 146–246; these read IEAE…APVF and VERL…KPSW. N-linked (GlcNAc...) asparagine glycans are attached at residues asparagine 299, asparagine 347, and asparagine 508. A helical membrane pass occupies residues 849–869; it reads ATLIIVVCVGFLVLMVVLGLV. Residues 870-957 are Cytoplasmic-facing; sequence RIHSLHRRVS…RIIETPPHRY (88 aa). The tract at residues 919-957 is disordered; sequence CVAGAAGGQQDDEDSSDSEAADSPSSDERRIIETPPHRY. Residues 928–938 show a composition bias toward acidic residues; that stretch reads QDDEDSSDSEA. Positions 944–957 are enriched in basic and acidic residues; the sequence is SDERRIIETPPHRY.

Belongs to the calsyntenin family. In terms of assembly, interacts (via cadherin domains) with both alpha and beta isoforms of neurexins (NRXN1, NRXN2 and NRXN3). Directly interacts with APBA2. Forms a tripartite complex with APBA2 and APP. Interacts with low affinity with KLC1. Interacts with SLC23A2/SVCT2. Proteolytically processed under normal cellular conditions. A primary zeta-cleavage generates a large extracellular (soluble) N-terminal domain (sAlc) and a short C-terminal transmembrane fragment (CTF1). A secondary cleavage catalyzed by gamma-secretase within the transmembrane domain releases the beta-Alc-beta chain in the extracellular milieu and produces an intracellular fragment (AlcICD). This processing is strongly suppressed in the tripartite complex formed with APBA2 and APP, which seems to prevent the association with gamma-secretase.

Its subcellular location is the postsynaptic cell membrane. It localises to the endoplasmic reticulum membrane. The protein resides in the golgi apparatus membrane. The protein localises to the cell projection. It is found in the dendrite. Postsynaptic adhesion molecule that binds to presynaptic neurexins to mediate both excitatory and inhibitory synapse formation. Promotes synapse development by acting as a cell adhesion molecule at the postsynaptic membrane, which associates with both neurexin-alpha and neurexin-beta proteins at the presynaptic membrane. Regulates the balance between excitatory and inhibitory synapses by inhibiting formation of excitatory parallel-fiber synapses and promoting formation of inhibitory synapses in the same neuron. May also be involved in ascorbate (vitamin C) uptake via its interaction with SLC23A2/SVCT2. Complex formation with APBA2 and APP, stabilizes APP metabolism and enhances APBA2-mediated suppression of beta-APP40 secretion, due to the retardation of intracellular APP maturation. The protein is Calsyntenin-3 (CLSTN3) of Bos taurus (Bovine).